Reading from the N-terminus, the 316-residue chain is Ornithine carbamoyltransferase (316 aa).

Residues 59–62, Q86, R110, and 137–140 contribute to the carbamoyl phosphate site; these read STRT and HPCQ. L-ornithine is bound by residues N168, D232, and 236-237; that span reads SM. Residues 273–274 and R301 contribute to the carbamoyl phosphate site; that span reads CL.

It belongs to the aspartate/ornithine carbamoyltransferase superfamily. OTCase family.

The protein localises to the cytoplasm. It carries out the reaction carbamoyl phosphate + L-ornithine = L-citrulline + phosphate + H(+). It functions in the pathway amino-acid biosynthesis; L-arginine biosynthesis; L-arginine from L-ornithine and carbamoyl phosphate: step 1/3. In terms of biological role, reversibly catalyzes the transfer of the carbamoyl group from carbamoyl phosphate (CP) to the N(epsilon) atom of ornithine (ORN) to produce L-citrulline. This Listeria monocytogenes serotype 4b (strain F2365) protein is Ornithine carbamoyltransferase.